A 74-amino-acid polypeptide reads, in one-letter code: Porwaprin-a (74 aa).

Residues 1-24 form the signal peptide; that stretch reads MSSGGLLLLLGLLTLWEVLTPVSS. Positions 27 to 71 constitute a WAP domain; that stretch reads RPKKLGLCPPRPQKPCVKECKNDWSCPGQQKCCNYGCIDECRDPI. Intrachain disulfides connect C34-C59, C42-C63, C46-C58, and C52-C67.

It belongs to the venom waprin family. Expressed by the venom gland.

It is found in the secreted. Damages membranes of susceptible bacteria. Has no hemolytic activity. Not toxic to mice. Does not inhibit the proteinases elastase and cathepsin G. The protein is Porwaprin-a of Pseudechis porphyriacus (Red-bellied black snake).